The sequence spans 401 residues: Lipid-A-disaccharide synthase (401 aa).

Belongs to the LpxB family.

The enzyme catalyses a lipid X + a UDP-2-N,3-O-bis[(3R)-3-hydroxyacyl]-alpha-D-glucosamine = a lipid A disaccharide + UDP + H(+). It functions in the pathway bacterial outer membrane biogenesis; LPS lipid A biosynthesis. In terms of biological role, condensation of UDP-2,3-diacylglucosamine and 2,3-diacylglucosamine-1-phosphate to form lipid A disaccharide, a precursor of lipid A, a phosphorylated glycolipid that anchors the lipopolysaccharide to the outer membrane of the cell. In Ruegeria pomeroyi (strain ATCC 700808 / DSM 15171 / DSS-3) (Silicibacter pomeroyi), this protein is Lipid-A-disaccharide synthase.